The sequence spans 659 residues: uncharacterized protein (659 aa).

A run of 16 helical transmembrane segments spans residues 24-44 (TTLM…YGLF), 71-91 (FGAS…VMMV), 115-135 (IGWL…DSGV), 157-177 (RAWI…RVII), 183-203 (FVLL…GNAG), 214-234 (AVIV…TAAL), 242-262 (AVLI…AELV), 279-299 (LGLV…WALV), 311-331 (LTAL…VQTA), 365-385 (FDSL…AGFV), 393-413 (TWPV…VFTS), 433-453 (MTLN…TLAL), 490-510 (FILF…DTLV), 517-537 (EFMA…IIGI), 550-570 (IGLL…LMTM), and 596-616 (IGGA…IVAL).

This sequence to M.tuberculosis Rv0102.

The protein resides in the cell membrane. This is an uncharacterized protein from Mycobacterium leprae (strain TN).